An 830-amino-acid chain; its full sequence is Probable glucan 1,3-beta-glucosidase D (830 aa).

The span at 1–34 (MPSQSRSRDRYRGRDTEYTRRRYPDEHDYSHDDH) shows a compositional bias: basic and acidic residues. The tract at residues 1–279 (MPSQSRSRDR…PPMDARWPKG (279 aa)) is disordered. Residues 1–301 (MPSQSRSRDR…GRPFWKQKKW (301 aa)) are Cytoplasmic-facing. The segment covering 35-51 (DYDYDDDDDDNDDLEQD) has biased composition (acidic residues). Basic and acidic residues-rich tracts occupy residues 52–98 (VTER…ERRR) and 110–175 (QHRE…KHQS). A compositionally biased stretch (low complexity) spans 181 to 194 (SASHLLSADALARL). Basic and acidic residues-rich tracts occupy residues 198-215 (YEKE…AAKA), 228-243 (EQER…DRSR), and 253-264 (EEGRGPEMEFRR). The chain crosses the membrane as a helical; Signal-anchor for type II membrane protein span at residues 302–322 (LIGIGVVILILVIVIPVAVVV). The Extracellular portion of the chain corresponds to 323-830 (SKKHNDKPNA…PDFGSLPEYY (508 aa)). The disordered stretch occupies residues 327-351 (NDKPNATTTQPDGTTPSNSNLDGLS). The segment covering 330 to 348 (PNATTTQPDGTTPSNSNLD) has biased composition (polar residues). Asparagine 331, asparagine 376, asparagine 381, asparagine 393, asparagine 546, and asparagine 558 each carry an N-linked (GlcNAc...) asparagine glycan. The active-site Proton donor is glutamate 597. N-linked (GlcNAc...) asparagine glycans are attached at residues asparagine 610, asparagine 636, asparagine 669, and asparagine 689. The active-site Nucleophile is glutamate 701.

It belongs to the glycosyl hydrolase 5 (cellulase A) family.

The protein resides in the cell membrane. The enzyme catalyses Successive hydrolysis of beta-D-glucose units from the non-reducing ends of (1-&gt;3)-beta-D-glucans, releasing alpha-glucose.. Functionally, glucosidase involved in the degradation of cellulosic biomass. Active on lichenan. The polypeptide is Probable glucan 1,3-beta-glucosidase D (exgD) (Aspergillus clavatus (strain ATCC 1007 / CBS 513.65 / DSM 816 / NCTC 3887 / NRRL 1 / QM 1276 / 107)).